A 70-amino-acid chain; its full sequence is Small ribosomal subunit protein bS21A (70 aa).

This sequence belongs to the bacterial ribosomal protein bS21 family.

In Paraburkholderia xenovorans (strain LB400), this protein is Small ribosomal subunit protein bS21A.